A 91-amino-acid polypeptide reads, in one-letter code: Small ribosomal subunit protein uS15c (91 aa).

This sequence belongs to the universal ribosomal protein uS15 family. Part of the 30S ribosomal subunit.

The protein localises to the plastid. It localises to the chloroplast. In Ceratophyllum demersum (Rigid hornwort), this protein is Small ribosomal subunit protein uS15c (rps15).